The primary structure comprises 341 residues: UDP-glucose 4-epimerase (341 aa).

Belongs to the polysaccharide synthase family.

The enzyme catalyses UDP-alpha-D-glucose = UDP-alpha-D-galactose. Epimerizes UDP-galactose to UDP-glucose. The sequence is that of UDP-glucose 4-epimerase (capD) from Rickettsia akari (strain Hartford).